Consider the following 91-residue polypeptide: Protein LURE 1.3 (91 aa).

The signal sequence occupies residues 1 to 20 (MKLPFIFLITLLIFVSSCTS). Asparagine 24 carries an N-linked (GlcNAc...) asparagine glycan. 3 disulfide bridges follow: cysteine 59–cysteine 76, cysteine 62–cysteine 83, and cysteine 66–cysteine 85. The PRK6 binding stretch occupies residues 68–88 (RRGKYIRTCSFERKLCRCSIS).

Belongs to the DEFL family. Binds to PRK6 LRRs. As to expression, expressed in the pistil. Detected exclusively in the synergid cells.

Its subcellular location is the secreted. In terms of biological role, pollen tube attractants guiding pollen tubes to the ovular micropyle. Attracts pollen tubes from both A.thaliana and A.lyrata. In Arabidopsis thaliana (Mouse-ear cress), this protein is Protein LURE 1.3.